A 434-amino-acid chain; its full sequence is Zinc carboxypeptidase (434 aa).

A signal peptide spans 1 to 33 (MSPKRRRLMAAALGACVALVLPLHAGSAQPSTA). The propeptide at 34–114 (KTPERTVFEV…DFTDPQVGTQ (81 aa)) is activation peptide. The Peptidase M14 domain occupies 122–423 (GYHNFQETVT…SAVELFLSYS (302 aa)). Residues histidine 183 and glutamate 186 each coordinate Zn(2+). A disordered region spans residues 270 to 295 (GSSSSGSSETTAARRRSPPRRSPHPH). Residues 282–293 (ARRRSPPRRSPH) show a composition bias toward basic residues. Histidine 315 is a Zn(2+) binding site. The Proton donor/acceptor role is filled by glutamate 388.

The protein belongs to the peptidase M14 family. Zn(2+) serves as cofactor.

The catalysed reaction is Releases a C-terminal residue, which may be hydrophobic or positively charged.. Its function is as follows. Carboxypeptidase that possesses the specificities of both mammalian Cpase A and B. Thus shows broad substrate specificity, being able to cleave Cbz-Gly-Leu, Cbz-Gly-Val, Cbz-Gly-Phe, Cbz-Gly-Lys and Bz-Gly-Arg in vitro. This is Zinc carboxypeptidase from Saccharothrix mutabilis subsp. capreolus (Streptomyces capreolus).